Consider the following 234-residue polypeptide: Large ribosomal subunit protein uL3 (234 aa).

A disordered region spans residues 137-156 (AGHGVERKHRSPGSVGGCAT).

It belongs to the universal ribosomal protein uL3 family. As to quaternary structure, part of the 50S ribosomal subunit. Forms a cluster with proteins L14 and L19.

One of the primary rRNA binding proteins, it binds directly near the 3'-end of the 23S rRNA, where it nucleates assembly of the 50S subunit. The sequence is that of Large ribosomal subunit protein uL3 from Frankia alni (strain DSM 45986 / CECT 9034 / ACN14a).